The primary structure comprises 129 residues: C-phycocyanin beta subunit (129 aa).

Position 62 is an N4-methylasparagine (N62). (2R,3E)-phycocyanobilin is bound at residue C116.

This sequence belongs to the phycobiliprotein family. In terms of assembly, heterodimer of an alpha and a beta subunit, which further assembles into trimers and the trimers into hexamers. In terms of processing, two isomers exist. Contains two covalently linked bilin chromophores.

Its subcellular location is the cellular thylakoid membrane. In terms of biological role, light-harvesting photosynthetic bile pigment-protein from the phycobiliprotein complex (phycobilisome, PBS). Phycocyanin is the major phycobiliprotein in the PBS rod. The chain is C-phycocyanin beta subunit from Aphanizomenon flos-aquae.